A 52-amino-acid chain; its full sequence is Metchnikowin (52 aa).

The N-terminal stretch at 1-24 is a signal peptide; that stretch reads MQLNLGAIFLALLGVMATATSVLA. Residues 25 to 26 constitute a propeptide that is removed on maturation; sequence EP. The segment at 28-52 is disordered; sequence RHQGPIFDTRPSPFNPNQPRPGPIY. The span at 40–52 shows a compositional bias: pro residues; it reads PFNPNQPRPGPIY.

Hemolymph (at protein level). Highest expression in fat body.

The protein resides in the secreted. Potent antifungal and antibacterial activity against Gram-positive bacteria. The sequence is that of Metchnikowin (Mtk) from Drosophila melanogaster (Fruit fly).